Reading from the N-terminus, the 160-residue chain is Protein MGF 300-2R (160 aa).

The protein belongs to the asfivirus MGF 300 family.

Plays a role in virus cell tropism, and may be required for efficient virus replication in macrophages. This chain is Protein MGF 300-2R, found in African swine fever virus (isolate Tick/Malawi/Lil 20-1/1983) (ASFV).